Reading from the N-terminus, the 215-residue chain is Porin MspB (215 aa).

The N-terminal stretch at 1–31 (MTAFKRVLIAMISALLAGTTGMFVSAGAAHA) is a signal peptide.

This sequence belongs to the mycobacterial porin (TC 1.B.24) family. As to quaternary structure, octamers. Probably forms a goblet with the wide end on the exterior of the outer membrane and a central channel. It is not known if mixed oligomers of MspB with other Msp subunits form in vivo.

The protein localises to the cell outer membrane. Its subcellular location is the secreted. It localises to the cell wall. Its function is as follows. A backup porin induced when MspA, the major porin, is deleted. Probably forms a water-filled channel which favors the permeation of cations. There are about 2400 porins in wild-type, 800 in an mspA deletion and 150 in a double mspA-mspC deletion. A triple mspA-mspC-mspD deletion mutant has low but detectable channel activity. Different conductance values with maxima at 2.3 and 4.6 nanosiemens might be caused by a simultaneous reconstitution of MspB channels into the membrane or by the existence of different MspB conformations. The chain is Porin MspB (mspB) from Mycolicibacterium smegmatis (strain ATCC 700084 / mc(2)155) (Mycobacterium smegmatis).